The sequence spans 813 residues: Cadherin-22 (813 aa).

Residues 1–33 (MRPRPAGALRAGAALSPVLLLLLLLQLLGHLWA) form the signal peptide. Residues 34 to 621 (ASTPAPSSLS…AFVMAASLSP (588 aa)) lie on the Extracellular side of the membrane. Cadherin domains lie at 61-165 (WVWN…EPRF), 166-274 (LHGP…PPRF), 275-391 (PQKM…PPEF), 392-495 (RPPS…NPPE), and 496-613 (LATP…TTAF). N-linked (GlcNAc...) asparagine glycosylation occurs at Asn-159. Asn-463 and Asn-609 each carry an N-linked (GlcNAc...) asparagine glycan. The helical transmembrane segment at 622-642 (GALIALLVCVLILVVLALLIL) threads the bilayer. Topologically, residues 643–813 (TLRRHHKSHL…HRGDDEAPAS (171 aa)) are cytoplasmic. Positions 696 to 726 (GGDPGGGAASPPQAASSSERHSLPRGPSSPE) are disordered.

As to expression, strongly expressed in the pituitary gland and the brain (in the inner granular and glomerular layers of the olfactory bulb, anterior olfactory nucleus, primary olfactory cortex, Purkinje cell layer of cerebellum, and pineal gland). Low expression in lung and heart. No expression in submandibular gland, thymus, liver, spleen, adrenal, and kidney.

Its subcellular location is the cell membrane. Cadherins are calcium-dependent cell adhesion proteins. They preferentially interact with themselves in a homophilic manner in connecting cells; cadherins may thus contribute to the sorting of heterogeneous cell types. PB-cadherins may have a role in the morphological organization of pituitary gland and brain tissues. This is Cadherin-22 (Cdh22) from Rattus norvegicus (Rat).